The primary structure comprises 123 residues: Protein lgg-1 (123 aa).

Residue G116 is the site of Phosphatidylethanolamine amidated glycine attachment. A propeptide spans 117-123 (removed in mature form); that stretch reads GEVEKKE.

The protein belongs to the ATG8 family. In terms of assembly, interacts with sepa-1 (via the LIR motifs); the interaction is direct. Interacts with allo-1 (via the LIR motif). Interacts with sqst-1 (via the LIR motifs); the interaction is direct. Both lipidated and unlipidated forms interact with epg-7 (via the LIR motif); the interaction is direct. Interacts with epg-2 (via the LIR motifs); the interaction is direct. Interacts with atg-13; the interaction is direct. Interacts with unc-51 (via the LIR motif); the interaction is direct. Interacts with atg-7; the interaction is direct. Interacts with atg-3. The interaction with atg-7 and atg-3 may be required for the lipidation of lgg-1. Cleaved by atg-4.1 and/or atg-4.2, after Gly-116 to form a thioester bond with 'Cys-523' of atg-7 (E1-like activating enzyme) before being transferred to 'Cys-255' of atg-3 (E2 conjugating enzyme), in order to be amidated with phosphatidylethanolamine. This lipid modification anchors lgg-1 to membranes and can be reversed by atg-4.2, releasing soluble lgg-1. C-terminal cleavage is essential for autophagosome initiation and biogenesis. Lipidation is not essential for autophagy or development but the lipidated form is involved in cargo recognition and autophagosome biogenesis. Lipidation regulates lgg-2-positive autophagosome formation. In terms of tissue distribution, expressed in PLML touch receptor neuron and in the ventral nerve cord. Expressed in AIY interneurons.

It is found in the preautophagosomal structure. It localises to the cytoplasmic vesicle. The protein localises to the autophagosome. Its subcellular location is the autophagosome membrane. The protein resides in the lysosome lumen. It is found in the mitochondrion. It localises to the cytoplasm. The protein localises to the phagosome membrane. Its subcellular location is the cell membrane. The protein resides in the cell projection. It is found in the dendrite. It localises to the perikaryon. Functionally, ubiquitin-like modifier involved in the formation of autophagosomal vacuoles (autophagosomes). When lipidated mediates tethering between adjacent membranes and stimulates membrane fusion during autophagy. Recruits lipidated-lgg-2 to maturing autophagosomes. Acts in the aggrephagy pathway, which is the macroautophagic degradation of ubiquitinated protein aggregates, and preferentially interacts with autophagy proteins and substrates containing LIR motifs to mediate autophagosome formation and protein aggregate degradation. In particular, binds to components of the unc-51-atg-13 complex to regulate autophagosome formation and cargo sequestration. Required for the degradation of specific sepa-1- and sqst-1-containing protein aggregates during embryogenesis. Involved in allophagy, which is an autophagic process in which paternal mitochondria and organelles are degraded during fertilization, and moreover is required for the formation of lgg-2-positive allophagic autophagosomes in embryos. Involved in the clearance of apoptotic cells by promoting the delivery of engulfed apoptotic cells to the lysosome. Plays a role in the distribution and clearance of germ cell specific P-granules from somatic cells. Also plays a role in the autophagy-mediated degradation of ribosomal RNA and ribosomal proteins in lysosomes. Involved in xenophagy, the autophagy-mediated degradation of pathogens and pathogen products, such as toxins. Required for normal survival when exposed to pathogenic bacteria S.typhimurium probably by promoting autophagic degradation of intracellular S.typhimurium. Also plays a role in membrane-pore repair. Plays a role in mitophagy. Essential for dauer development and longevity, including longevity in response to moderate, short-term heat shock, also known as a hormetic heat shock. The sequence is that of Protein lgg-1 from Caenorhabditis elegans.